The chain runs to 773 residues: Glucan endo-1,3-beta-D-glucosidase (773 aa).

The tract at residues 1-194 is beta-sandwich subdomain; the sequence is MPPGAKVPQA…KNYFSIAVLP (194 aa). One can recognise a GH81 domain in the interval 1–647; that stretch reads MPPGAKVPQA…HWICNLDSLG (647 aa). Mg(2+) contacts are provided by Ile31, Asn34, Gln35, Tyr36, and Ala89. Residues 195–288 are alpha/beta subdomain; it reads DNTVSTLTYY…QGTSFKTVYR (94 aa). The tract at residues 298–647 is (alpha/beta)6 barrel subdomain; that stretch reads DKGTYDREAL…HWICNLDSLG (350 aa). 2 residues coordinate (1,3-beta-D-glucosyl)n: Tyr327 and Lys331. Ca(2+) contacts are provided by Asp365, Thr368, Glu373, and Lys376. 2 residues coordinate (1,3-beta-D-glucosyl)n: Asp402 and His406. Asp402 is a catalytic residue. Residues Leu454, Arg455, and Phe457 each coordinate Ca(2+). Positions 477, 479, and 483 each coordinate (1,3-beta-D-glucosyl)n. Residues Glu479 and Glu483 contribute to the active site. 4 residues coordinate Mg(2+): Lys527, Lys618, Asn619, and Trp621. The Ca(2+) site is built by Asp712, Asn714, Asp716, Gly717, Lys718, Asp723, Asp748, Ile749, Asn750, Asp752, Lys754, and Asp759.

It belongs to the glycosyl hydrolase 81 family. Requires Ca(2+) as cofactor. Mg(2+) is required as a cofactor.

It localises to the secreted. It carries out the reaction Hydrolysis of (1-&gt;3)-beta-D-glucosidic linkages in (1-&gt;3)-beta-D-glucans.. Inhibited by manganese, zinc, and copper ions. Its function is as follows. Cleaves internal linkages in 1,3-beta-glucan. May contribute to plant biomass degradation. This is Glucan endo-1,3-beta-D-glucosidase from Acetivibrio thermocellus (strain ATCC 27405 / DSM 1237 / JCM 9322 / NBRC 103400 / NCIMB 10682 / NRRL B-4536 / VPI 7372) (Clostridium thermocellum).